The sequence spans 113 residues: Colipase (113 aa).

The signal sequence occupies residues 1–18 (MEKVLVLLLVSLLAVAYA). Positions 19–23 (APGPR) are cleaved as a propeptide — enterostatin, activation peptide. 5 disulfide bridges follow: Cys-35–Cys-46, Cys-41–Cys-57, Cys-45–Cys-79, Cys-67–Cys-87, and Cys-81–Cys-105.

It belongs to the colipase family. As to quaternary structure, forms a 1:1 stoichiometric complex with pancreatic lipase. As to expression, expressed by the pancreas.

It is found in the secreted. Colipase is a cofactor of pancreatic lipase. It allows the lipase to anchor itself to the lipid-water interface. Without colipase the enzyme is washed off by bile salts, which have an inhibitory effect on the lipase. In terms of biological role, enterostatin has a biological activity as a satiety signal. The chain is Colipase from Mus musculus (Mouse).